Here is a 308-residue protein sequence, read N- to C-terminus: Tetraacyldisaccharide 4'-kinase (308 aa).

63–70 serves as a coordination point for ATP; sequence SFGGNGKT.

The protein belongs to the LpxK family.

It catalyses the reaction a lipid A disaccharide + ATP = a lipid IVA + ADP + H(+). It functions in the pathway glycolipid biosynthesis; lipid IV(A) biosynthesis; lipid IV(A) from (3R)-3-hydroxytetradecanoyl-[acyl-carrier-protein] and UDP-N-acetyl-alpha-D-glucosamine: step 6/6. In terms of biological role, transfers the gamma-phosphate of ATP to the 4'-position of a tetraacyldisaccharide 1-phosphate intermediate (termed DS-1-P) to form tetraacyldisaccharide 1,4'-bis-phosphate (lipid IVA). The sequence is that of Tetraacyldisaccharide 4'-kinase from Campylobacter jejuni subsp. jejuni serotype O:6 (strain 81116 / NCTC 11828).